Reading from the N-terminus, the 155-residue chain is 6,7-dimethyl-8-ribityllumazine synthase (155 aa).

5-amino-6-(D-ribitylamino)uracil contacts are provided by residues phenylalanine 24, 58-60, and 82-84; these read AFE and AII. Residue 87–88 participates in (2S)-2-hydroxy-3-oxobutyl phosphate binding; sequence ST. Histidine 90 acts as the Proton donor in catalysis. Phenylalanine 115 is a binding site for 5-amino-6-(D-ribitylamino)uracil. Arginine 129 contacts (2S)-2-hydroxy-3-oxobutyl phosphate.

Belongs to the DMRL synthase family.

The catalysed reaction is (2S)-2-hydroxy-3-oxobutyl phosphate + 5-amino-6-(D-ribitylamino)uracil = 6,7-dimethyl-8-(1-D-ribityl)lumazine + phosphate + 2 H2O + H(+). It participates in cofactor biosynthesis; riboflavin biosynthesis; riboflavin from 2-hydroxy-3-oxobutyl phosphate and 5-amino-6-(D-ribitylamino)uracil: step 1/2. Functionally, catalyzes the formation of 6,7-dimethyl-8-ribityllumazine by condensation of 5-amino-6-(D-ribitylamino)uracil with 3,4-dihydroxy-2-butanone 4-phosphate. This is the penultimate step in the biosynthesis of riboflavin. The protein is 6,7-dimethyl-8-ribityllumazine synthase of Chlorobium phaeobacteroides (strain BS1).